The following is a 272-amino-acid chain: D-aminoacyl-tRNA deacylase (272 aa).

Belongs to the DtdA deacylase family. As to quaternary structure, monomer. Zn(2+) serves as cofactor.

The enzyme catalyses a D-aminoacyl-tRNA + H2O = a tRNA + a D-alpha-amino acid + H(+). It carries out the reaction glycyl-tRNA(Ala) + H2O = tRNA(Ala) + glycine + H(+). In terms of biological role, D-aminoacyl-tRNA deacylase with broad substrate specificity. By recycling D-aminoacyl-tRNA to D-amino acids and free tRNA molecules, this enzyme counteracts the toxicity associated with the formation of D-aminoacyl-tRNA entities in vivo. The sequence is that of D-aminoacyl-tRNA deacylase from Hyperthermus butylicus (strain DSM 5456 / JCM 9403 / PLM1-5).